We begin with the raw amino-acid sequence, 629 residues long: Probable potassium transport system protein Kup 3 (629 aa).

12 helical membrane-spanning segments follow: residues 20–40 (LSLS…LYTF), 61–81 (VSLI…HFAL), 106–126 (PFII…GTIT), 143–163 (PSLK…LFAI), 171–191 (IGKA…ILGA), 209–229 (GLSF…GVFL), 253–273 (WFGL…ALVL), 291–311 (FLLP…QAII), 343–363 (IYIG…TIGF), 372–392 (AYGI…FIAL), 400–420 (IITS…FFAA), and 425–445 (FING…MMYI).

It belongs to the HAK/KUP transporter (TC 2.A.72) family.

It localises to the cell inner membrane. The catalysed reaction is K(+)(in) + H(+)(in) = K(+)(out) + H(+)(out). Transport of potassium into the cell. Likely operates as a K(+):H(+) symporter. The protein is Probable potassium transport system protein Kup 3 of Legionella pneumophila subsp. pneumophila (strain Philadelphia 1 / ATCC 33152 / DSM 7513).